Reading from the N-terminus, the 303-residue chain is Sodium/potassium-transporting ATPase subunit beta-1 (303 aa).

Residues 1-34 (MPAATKDSDGGWKKFLWNSEKKEFLGRTGGSWAK) lie on the Cytoplasmic side of the membrane. Residues 35–55 (ILLFYVIFYGCLAGIFIGTIQ) form a helical; Signal-anchor for type II membrane protein membrane-spanning segment. Over 56–303 (ALLLTINDFK…FDVKFTINES (248 aa)) the chain is Extracellular. Asn113 is a glycosylation site (N-linked (GlcNAc...) asparagine). Cystine bridges form between Cys126–Cys149 and Cys159–Cys175. N-linked (GlcNAc...) asparagine glycosylation is found at Asn194 and Asn264. A disulfide bridge links Cys214 with Cys275.

This sequence belongs to the X(+)/potassium ATPases subunit beta family. As to quaternary structure, the sodium/potassium-transporting ATPase is composed of a catalytic alpha subunit, an auxiliary non-catalytic beta subunit and an additional regulatory subunit. In terms of tissue distribution, detected in all tissues except liver and cardiac muscle. Highest levels found in intestine, ovary and kidney with marginally lower levels in brain, spleen, esophagus, eye and pancreas, intermediate levels in gill and low levels in white and red skeletal muscle.

It is found in the cell membrane. In terms of biological role, this is the non-catalytic component of the active enzyme, which catalyzes the hydrolysis of ATP coupled with the exchange of Na(+) and K(+) ions across the plasma membrane. The beta subunit regulates, through assembly of alpha/beta heterodimers, the number of sodium pumps transported to the plasma membrane. This chain is Sodium/potassium-transporting ATPase subunit beta-1 (atp1b1), found in Anguilla anguilla (European freshwater eel).